A 1127-amino-acid chain; its full sequence is MAENKGGGEAESGGGGSGSAPVTAGAAGPAAQEAEPPLTAVLVEEEEEEGGRAGAEGGAAGPDDGGVAAASSGSAQAASSPAASVGTGVAGGAVSTPAPAPASAPAPGPSAGPPPGPPASLLDTCAVCQQSLQSRREAEPKLLPCLHSFCLRCLPEPERQLSVPIPGGSNGDIQQVGVIRCPVCRQECRQIDLVDNYFVKDTSEAPSSSDEKSEQVCTSCEDNASAVGFCVECGEWLCKTCIEAHQRVKFTKDHLIRKKEDVSESVGASGQRPVFCPVHKQEQLKLFCETCDRLTCRDCQLLEHKEHRYQFLEEAFQNQKGAIENLLAKLLEKKNYVHFAATQVQNRIKEVNETNKRVEQEIKVAIFTLINEINKKGKSLLQQLENVTKERQMKLLQQQNDITGLSRQVKHVMNFTNWAIASGSSTALLYSKRLITFQLRHILKARCDPVPAANGAIRFHCDPTFWAKNVVNLGNLVIESKPAPGYTPNVVVGQVPPGTNHISKTPGQINLAQLRLQHMQQQVYAQKHQQLQQMRMQQPPAPVPTTTTTTQQHPRQAAPQMLQQQPPRLISVQTMQRGNMNCGAFQAHQMRLAQNAARIPGIPRHSGPQYSMMQPHLQRQHSNPGHAGPFPVVSVHNTTINPTSPTTATMANANRGPTSPSVTAIELIPSVTNPENLPSLPDIPPIQLEDAGSSSLDNLLSRYISGSHLPPQPTSTMNPSPGPSALSPGSSGLSNSHTPVRPPSTSSTGSRGSCGSSGRTAEKTSLSFKSDQVKVKQEPGTEDEICSFSGGVKQEKTEDGRRSACMLSSPESSLTPPLSTNLHLESELDALASLENHVKIEPADMNESCKQSGLSSLVNGKSPIRSLMHRSARIGGDGNNKDDDPNEDWCAVCQNGGDLLCCEKCPKVFHLTCHVPTLLSFPSGDWICTFCRDIGKPEVEYDCDNLQHSKKGKTAQGLSPVDQRKCERLLLYLYCHELSIEFQEPVPASIPNYYKIIKKPMDLSTVKKKLQKKHSQHYQIPDDFVADVRLIFKNCERFNEMMKVVQVYADTQEINLKADSEVAQAGKAVALYFEDKLTEIYSDRTFAPLPEFEQEEDDGEVTEDSDEDFIQPRRKRLKSDERPVHIK.

The segment covering 1–18 (MAENKGGGEAESGGGGSG) has biased composition (gly residues). Residues 1-118 (MAENKGGGEA…PSAGPPPGPP (118 aa)) are disordered. The segment at 1 to 147 (MAENKGGGEA…AEPKLLPCLH (147 aa)) is necessary for E3 ubiquitin-protein ligase activity and repression of SMAD4 signaling and transcriptional repression. The span at 19-37 (SAPVTAGAAGPAAQEAEPP) shows a compositional bias: low complexity. Residues 52 to 64 (RAGAEGGAAGPDD) are compositionally biased toward gly residues. Positions 65 to 97 (GGVAAASSGSAQAASSPAASVGTGVAGGAVSTP) are enriched in low complexity. Residues 98-118 (APAPASAPAPGPSAGPPPGPP) are compositionally biased toward pro residues. The RING-type zinc finger occupies 125 to 154 (CAVCQQSLQSRREAEPKLLPCLHSFCLRCL). 2 B box-type zinc fingers span residues 212–259 (KSEQ…IRKK) and 271–312 (QRPV…YQFL). Residues cysteine 217, cysteine 220, cysteine 241, histidine 245, cysteine 276, histidine 279, cysteine 299, and histidine 304 each contribute to the Zn(2+) site. Residues 299–401 (CQLLEHKEHR…QMKLLQQQND (103 aa)) are necessary for oligomerization. A coiled-coil region spans residues 299-401 (CQLLEHKEHR…QMKLLQQQND (103 aa)). Glycyl lysine isopeptide (Lys-Gly) (interchain with G-Cter in SUMO2) cross-links involve residues lysine 329, lysine 334, lysine 481, and lysine 504. Asymmetric dimethylarginine; alternate is present on arginine 515. At arginine 515 the chain carries Omega-N-methylarginine; alternate. Lysine 527 is covalently cross-linked (Glycyl lysine isopeptide (Lys-Gly) (interchain with G-Cter in SUMO2)). Position 535 is an omega-N-methylarginine (arginine 535). The tract at residues 536–563 (MQQPPAPVPTTTTTTQQHPRQAAPQMLQ) is disordered. Arginine 577 is subject to Asymmetric dimethylarginine. Arginine 591 bears the Asymmetric dimethylarginine; alternate mark. At arginine 591 the chain carries Omega-N-methylarginine; alternate. Arginine 598 and arginine 604 each carry asymmetric dimethylarginine. 3 disordered regions span residues 608–629 (PQYS…HAGP), 673–692 (NPEN…EDAG), and 703–818 (YISG…TPPL). Over residues 723-759 (PSALSPGSSGLSNSHTPVRPPSTSSTGSRGSCGSSGR) the composition is skewed to low complexity. N6-acetyllysine; alternate is present on residues lysine 763 and lysine 769. Glycyl lysine isopeptide (Lys-Gly) (interchain with G-Cter in SUMO2); alternate cross-links involve residues lysine 763 and lysine 769. Lysine 774 participates in a covalent cross-link: Glycyl lysine isopeptide (Lys-Gly) (interchain with G-Cter in SUMO2). Glycyl lysine isopeptide (Lys-Gly) (interchain with G-Cter in SUMO2); alternate cross-links involve residues lysine 776 and lysine 793. Residues lysine 776 and lysine 793 each participate in a glycyl lysine isopeptide (Lys-Gly) (interchain with G-Cter in SUMO1); alternate cross-link. Lysine 793 bears the N6-acetyllysine; alternate mark. The span at 793 to 802 (KQEKTEDGRR) shows a compositional bias: basic and acidic residues. Residue lysine 796 forms a Glycyl lysine isopeptide (Lys-Gly) (interchain with G-Cter in SUMO2) linkage. At serine 803 the chain carries Phosphoserine. A compositionally biased stretch (low complexity) spans 807 to 818 (LSSPESSLTPPL). Threonine 815 carries the post-translational modification Phosphothreonine. Lysine 861 is covalently cross-linked (Glycyl lysine isopeptide (Lys-Gly) (interchain with G-Cter in SUMO2)). At serine 862 the chain carries Phosphoserine. The segment at 887–934 (EDWCAVCQNGGDLLCCEKCPKVFHLTCHVPTLLSFPSGDWICTFCRDI) adopts a PHD-type zinc-finger fold. The residue at position 951 (lysine 951) is an N6-acetyllysine. An N6-acetyllysine; alternate modification is found at lysine 953. A Glycyl lysine isopeptide (Lys-Gly) (interchain with G-Cter in SUMO2); alternate cross-link involves residue lysine 953. Positions 957–1080 (GLSPVDQRKC…LYFEDKLTEI (124 aa)) constitute a Bromo domain. Residues lysine 1007 and lysine 1043 each participate in a glycyl lysine isopeptide (Lys-Gly) (interchain with G-Cter in SUMO2) cross-link. Phosphothreonine is present on threonine 1051. Residue lysine 1057 forms a Glycyl lysine isopeptide (Lys-Gly) (interchain with G-Cter in SUMO2) linkage. The interval 1088-1127 (PLPEFEQEEDDGEVTEDSDEDFIQPRRKRLKSDERPVHIK) is disordered. Positions 1092 to 1109 (FEQEEDDGEVTEDSDEDF) are enriched in acidic residues. Threonine 1102 is modified (phosphothreonine). Serine 1105 is subject to Phosphoserine. Lysine 1118 participates in a covalent cross-link: Glycyl lysine isopeptide (Lys-Gly) (interchain with G-Cter in SUMO2). Residues 1118 to 1127 (KSDERPVHIK) show a composition bias toward basic and acidic residues. Serine 1119 bears the Phosphoserine mark.

This sequence belongs to the TRIM/RBCC family. Homooligomer and heterooligomer with TRIM24 and TRIM28 family members. Interacts with SMAD4 in unstimulated cells. Found in a complex with SMAD2 and SMAD3 upon addition of TGF-beta. Interacts with SMAD2 and SMAD3. Interacts with SMAD4 under basal and induced conditions and, upon TGF-beta signaling, with activated SMAD2. Forms a ternary complex with SMAD4 and SMAD2 upon TGF-beta signaling. Sumoylated with SUMO1. Expressed in stem cells at the bottom of the crypts of the colon (at protein level). Expressed in colon adenomas and adenocarcinomas (at protein level). Expressed in brain, lung, liver, spleen, thymus, prostate, kidney, testis, heart, placenta, pancreas, small intestine, ovary, colon, skeletal muscle and hematopoietic progenitors.

It is found in the nucleus. The enzyme catalyses S-ubiquitinyl-[E2 ubiquitin-conjugating enzyme]-L-cysteine + [acceptor protein]-L-lysine = [E2 ubiquitin-conjugating enzyme]-L-cysteine + N(6)-ubiquitinyl-[acceptor protein]-L-lysine.. The protein operates within protein modification; protein ubiquitination. In terms of biological role, acts as an E3 ubiquitin-protein ligase. Promotes SMAD4 ubiquitination, nuclear exclusion and degradation via the ubiquitin proteasome pathway. According to PubMed:16751102, does not promote a decrease in the level of endogenous SMAD4. May act as a transcriptional repressor. Inhibits the transcriptional response to TGF-beta/BMP signaling cascade. Plays a role in the control of cell proliferation. Its association with SMAD2 and SMAD3 stimulates erythroid differentiation of hematopoietic stem/progenitor. Monoubiquitinates SMAD4 and acts as an inhibitor of SMAD4-dependent TGF-beta/BMP signaling cascade (Monoubiquitination of SMAD4 hampers its ability to form a stable complex with activated SMAD2/3 resulting in inhibition of TGF-beta/BMP signaling cascade). The polypeptide is E3 ubiquitin-protein ligase TRIM33 (TRIM33) (Homo sapiens (Human)).